We begin with the raw amino-acid sequence, 188 residues long: Apolipoprotein M (188 aa).

Residues 1–22 (MFHQIWAALLYFYGIILNSIYQ) constitute a signal peptide (not cleaved). Intrachain disulfides connect cysteine 23-cysteine 167, cysteine 95-cysteine 183, and cysteine 128-cysteine 157. The N-linked (GlcNAc...) asparagine glycan is linked to asparagine 135. Positions 136 and 143 each coordinate tetradecanoate.

Belongs to the calycin superfamily. Lipocalin family. Highly divergent. As to quaternary structure, interacts with LRP2; LRP2 mediates APOM renal uptake and subsequent lysosomal degradation. In terms of tissue distribution, plasma protein. Expressed in liver and kidney.

The protein localises to the secreted. Probably involved in lipid transport. Can bind sphingosine-1-phosphate, myristic acid, palmitic acid and stearic acid, retinol, all-trans-retinoic acid and 9-cis-retinoic acid. The sequence is that of Apolipoprotein M (APOM) from Homo sapiens (Human).